The sequence spans 116 residues: NADPH-dependent 7-cyano-7-deazaguanine reductase (116 aa).

The active-site Thioimide intermediate is Cys31. The active-site Proton donor is the Asp38. Substrate-binding positions include 53–55 (VEL) and 72–73 (YE).

Belongs to the GTP cyclohydrolase I family. QueF type 1 subfamily.

The protein resides in the cytoplasm. The enzyme catalyses 7-aminomethyl-7-carbaguanine + 2 NADP(+) = 7-cyano-7-deazaguanine + 2 NADPH + 3 H(+). Its pathway is tRNA modification; tRNA-queuosine biosynthesis. Its function is as follows. Catalyzes the NADPH-dependent reduction of 7-cyano-7-deazaguanine (preQ0) to 7-aminomethyl-7-deazaguanine (preQ1). The sequence is that of NADPH-dependent 7-cyano-7-deazaguanine reductase from Chloroherpeton thalassium (strain ATCC 35110 / GB-78).